The primary structure comprises 409 residues: Glutamyl-tRNA(Gln) amidotransferase subunit D (409 aa).

The Asparaginase/glutaminase domain occupies 68-390 (RKISVLATGG…DLFRDLFRKN (323 aa)). Residues Thr-78, Thr-152, Asp-153, and Lys-230 contribute to the active site.

The protein belongs to the asparaginase 1 family. GatD subfamily. As to quaternary structure, heterodimer of GatD and GatE.

It catalyses the reaction L-glutamyl-tRNA(Gln) + L-glutamine + ATP + H2O = L-glutaminyl-tRNA(Gln) + L-glutamate + ADP + phosphate + H(+). Its function is as follows. Allows the formation of correctly charged Gln-tRNA(Gln) through the transamidation of misacylated Glu-tRNA(Gln) in organisms which lack glutaminyl-tRNA synthetase. The reaction takes place in the presence of glutamine and ATP through an activated gamma-phospho-Glu-tRNA(Gln). The GatDE system is specific for glutamate and does not act on aspartate. This chain is Glutamyl-tRNA(Gln) amidotransferase subunit D, found in Thermoplasma acidophilum (strain ATCC 25905 / DSM 1728 / JCM 9062 / NBRC 15155 / AMRC-C165).